Here is a 289-residue protein sequence, read N- to C-terminus: Ribosomal protein L11 methyltransferase (289 aa).

Residues Thr142, Gly163, Asp185, and Asn226 each coordinate S-adenosyl-L-methionine.

This sequence belongs to the methyltransferase superfamily. PrmA family.

It is found in the cytoplasm. The enzyme catalyses L-lysyl-[protein] + 3 S-adenosyl-L-methionine = N(6),N(6),N(6)-trimethyl-L-lysyl-[protein] + 3 S-adenosyl-L-homocysteine + 3 H(+). In terms of biological role, methylates ribosomal protein L11. This chain is Ribosomal protein L11 methyltransferase, found in Legionella pneumophila (strain Corby).